A 146-amino-acid polypeptide reads, in one-letter code: Hemoglobin subunit beta (146 aa).

At V1 the chain carries N-acetylvaline. The Globin domain maps to H2–H146. T12 bears the Phosphothreonine mark. S44 is modified (phosphoserine). At K59 the chain carries N6-acetyllysine. Residue H63 coordinates heme b. Position 82 is an N6-acetyllysine (K82). H92 provides a ligand contact to heme b. C93 is modified (S-nitrosocysteine). An N6-acetyllysine modification is found at K144.

Belongs to the globin family. Heterotetramer of two alpha chains and two beta chains. As to expression, red blood cells.

Its function is as follows. Involved in oxygen transport from the lung to the various peripheral tissues. The chain is Hemoglobin subunit beta (HBB) from Meles meles (Eurasian badger).